The sequence spans 124 residues: Large ribosomal subunit protein bL19 (124 aa).

This sequence belongs to the bacterial ribosomal protein bL19 family.

Its function is as follows. This protein is located at the 30S-50S ribosomal subunit interface and may play a role in the structure and function of the aminoacyl-tRNA binding site. The polypeptide is Large ribosomal subunit protein bL19 (Cereibacter sphaeroides (strain ATCC 17029 / ATH 2.4.9) (Rhodobacter sphaeroides)).